A 203-amino-acid chain; its full sequence is Large ribosomal subunit protein bL25 (203 aa).

It belongs to the bacterial ribosomal protein bL25 family. CTC subfamily. Part of the 50S ribosomal subunit; part of the 5S rRNA/L5/L18/L25 subcomplex. Contacts the 5S rRNA. Binds to the 5S rRNA independently of L5 and L18.

In terms of biological role, this is one of the proteins that binds to the 5S RNA in the ribosome where it forms part of the central protuberance. The chain is Large ribosomal subunit protein bL25 from Wolbachia pipientis subsp. Culex pipiens (strain wPip).